The primary structure comprises 575 residues: Urease subunit alpha (575 aa).

In terms of domain architecture, Urease spans 137–575 (GGIDCHIHFI…LPMTQRYFLF (439 aa)). Ni(2+) is bound by residues H142, H144, and K225. The residue at position 225 (K225) is an N6-carboxylysine. A substrate-binding site is contributed by H227. Positions 254 and 280 each coordinate Ni(2+). The active-site Proton donor is H328. D368 is a Ni(2+) binding site.

Belongs to the metallo-dependent hydrolases superfamily. Urease alpha subunit family. Heterotrimer of UreA (gamma), UreB (beta) and UreC (alpha) subunits. Three heterotrimers associate to form the active enzyme. Ni cation serves as cofactor. Carboxylation allows a single lysine to coordinate two nickel ions.

The protein localises to the cytoplasm. The enzyme catalyses urea + 2 H2O + H(+) = hydrogencarbonate + 2 NH4(+). The protein operates within nitrogen metabolism; urea degradation; CO(2) and NH(3) from urea (urease route): step 1/1. This chain is Urease subunit alpha, found in Methylibium petroleiphilum (strain ATCC BAA-1232 / LMG 22953 / PM1).